The sequence spans 172 residues: 3-hydroxydecanoyl-[acyl-carrier-protein] dehydratase (172 aa).

The active site involves His71.

This sequence belongs to the thioester dehydratase family. FabA subfamily. As to quaternary structure, homodimer.

It localises to the cytoplasm. The catalysed reaction is a (3R)-hydroxyacyl-[ACP] = a (2E)-enoyl-[ACP] + H2O. The enzyme catalyses (3R)-hydroxydecanoyl-[ACP] = (2E)-decenoyl-[ACP] + H2O. It catalyses the reaction (2E)-decenoyl-[ACP] = (3Z)-decenoyl-[ACP]. It participates in lipid metabolism; fatty acid biosynthesis. Functionally, necessary for the introduction of cis unsaturation into fatty acids. Catalyzes the dehydration of (3R)-3-hydroxydecanoyl-ACP to E-(2)-decenoyl-ACP and then its isomerization to Z-(3)-decenoyl-ACP. Can catalyze the dehydratase reaction for beta-hydroxyacyl-ACPs with saturated chain lengths up to 16:0, being most active on intermediate chain length. The protein is 3-hydroxydecanoyl-[acyl-carrier-protein] dehydratase of Vibrio cholerae serotype O1 (strain ATCC 39541 / Classical Ogawa 395 / O395).